Here is an 87-residue protein sequence, read N- to C-terminus: Small ribosomal subunit protein bS20 (87 aa).

Belongs to the bacterial ribosomal protein bS20 family.

In terms of biological role, binds directly to 16S ribosomal RNA. The protein is Small ribosomal subunit protein bS20 of Alkaliphilus oremlandii (strain OhILAs) (Clostridium oremlandii (strain OhILAs)).